Reading from the N-terminus, the 1669-residue chain is Collagen alpha-1(IV) chain (1669 aa).

The signal sequence occupies residues 1-27 (MGPRLSVWLLLLFAALLLHEERSRAAA). A propeptide spans 28 to 172 (KGDCGGSGCG…LGHVPGTLLK (145 aa)) (N-terminal propeptide (7S domain)). The segment at 47–1443 (QKGERGLPGL…MGPPGTPSVD (1397 aa)) is disordered. Positions 92–104 (TRGPPGAAGYPGN) are enriched in low complexity. Asn126 is a glycosylation site (N-linked (GlcNAc...) asparagine). The tract at residues 173-1440 (GERGFPGIPG…PGSMGPPGTP (1268 aa)) is triple-helical region. Over residues 196–214 (VGPPGFTGPPGPPGPPGPP) the composition is skewed to pro residues. 3 positions are modified to 3-hydroxyproline: Pro204, Pro207, and Pro210. The segment covering 234-247 (QGVSGPPGVPGQAQ) has biased composition (low complexity). The span at 289–298 (PGKDGEKGER) shows a compositional bias: basic and acidic residues. A compositionally biased stretch (pro residues) spans 367-376 (PGQPGPPGFP). Residues 377-387 (TPGQAGAPGFP) show a composition bias toward low complexity. Pro residues-rich tracts occupy residues 413 to 424 (PGPPGPPGPPGQ) and 436 to 448 (PGPPGDQGPPGTP). Over residues 485–494 (PGEIGFPGQP) the composition is skewed to low complexity. Basic and acidic residues-rich tracts occupy residues 497-508 (KGDRGLPGRDGL) and 535-545 (FDMRLKGDKGD). Gly residues predominate over residues 586–595 (GPPGGVGFPG). 3-hydroxyproline is present on residues Pro587 and Pro602. A 4-hydroxyproline modification is found at Pro603. At Pro605 the chain carries 3-hydroxyproline. At Pro606 the chain carries 4-hydroxyproline. Positions 611-620 (IGPVGEKGQA) are enriched in low complexity. Over residues 621 to 630 (GFPGGPGSPG) the composition is skewed to gly residues. Pro623, Pro626, Pro629, and Pro632 each carry 4-hydroxyproline. The residue at position 647 (Pro647) is a 3-hydroxyproline. Residues 715–731 (RPGFNGLPGNPGPQGQK) are compositionally biased toward low complexity. Residues 758 to 767 (GSIGGPGVPG) show a composition bias toward gly residues. Positions 784–802 (PGPPGVQGPAGPPGVPGIG) are enriched in pro residues. A compositionally biased stretch (gly residues) spans 803–817 (PPGAMGPPGGQGPPG). 2 stretches are compositionally biased toward low complexity: residues 847-875 (SQGLPGLTGQSGLPGLPGQQGTPGVPGFP) and 994-1003 (DPGLSGTPGS). Residues 1011 to 1020 (GSVGGMGLPG) show a composition bias toward gly residues. 3-hydroxyproline is present on Pro1214. Low complexity predominate over residues 1220 to 1230 (QPGLPGTPGHP). Positions 1247–1258 (PGHPGPMGPPGF) are enriched in pro residues. Residues 1290 to 1299 (GMPGIGGSPG) are compositionally biased toward gly residues. Composition is skewed to low complexity over residues 1333–1343 (DQGVPGPKGLQ), 1368–1391 (PGLKGLQGPPGPKGQQGVTGSVGL), and 1398–1412 (PGFDGAPGQKGETGP). Over residues 1413-1428 (FGPPGPRGFPGPPGPD) the composition is skewed to pro residues. Pro1424 carries the 3-hydroxyproline modification. The 225-residue stretch at 1445 to 1669 (GFLVTRHSQT…SRCQVCMRRT (225 aa)) folds into the Collagen IV NC1 domain. Disulfide bonds link Cys1460–Cys1551, Cys1493–Cys1548, Cys1505–Cys1511, Cys1570–Cys1665, Cys1604–Cys1662, and Cys1616–Cys1622. An S-Lysyl-methionine sulfilimine (Met-Lys) (interchain with K-1651) cross-link involves residue Met1533. Lys1651 is covalently cross-linked (S-Lysyl-methionine sulfilimine (Lys-Met) (interchain with M-1533)).

Belongs to the type IV collagen family. There are six type IV collagen isoforms, alpha 1(IV)-alpha 6(IV), each of which can form a triple helix structure with 2 other chains to generate type IV collagen network. Interacts with EFEMP2. In terms of processing, lysines at the third position of the tripeptide repeating unit (G-X-Y) are hydroxylated. The modified lysines can be O-glycosylated. Post-translationally, contains 4-hydroxyproline. Prolines at the third position of the tripeptide repeating unit (G-X-Y) are hydroxylated in some or all of the chains. Contains 3-hydroxyproline. This modification occurs on the first proline residue in the sequence motif Gly-Pro-Hyp, where Hyp is 4-hydroxyproline. In terms of processing, type IV collagens contain numerous cysteine residues which are involved in inter- and intramolecular disulfide bonding. 12 of these, located in the NC1 domain, are conserved in all known type IV collagens. Post-translationally, the trimeric structure of the NC1 domains is stabilized by covalent bonds (sulfilimine cross-links) between Lys and Met residues. These cross-links are important for the mechanical stability of the basement membrane. Sulfilimine cross-link is catalyzed by PXDN. Proteolytic processing produces the C-terminal NC1 peptide, arresten. In terms of tissue distribution, detected in the basement membrane of the cornea (at protein level).

The protein localises to the secreted. The protein resides in the extracellular space. It is found in the extracellular matrix. It localises to the basement membrane. Type IV collagen is the major structural component of glomerular basement membranes (GBM), forming a 'chicken-wire' meshwork together with laminins, proteoglycans and entactin/nidogen. In terms of biological role, arresten, comprising the C-terminal NC1 domain, inhibits angiogenesis and tumor formation. The C-terminal half is found to possess the anti-angiogenic activity. Specifically inhibits endothelial cell proliferation, migration and tube formation. This chain is Collagen alpha-1(IV) chain, found in Mus musculus (Mouse).